Here is a 336-residue protein sequence, read N- to C-terminus: DNA-directed RNA polymerase subunit alpha (336 aa).

Residues 1–232 (MIQKNWQELI…DQLGVFVNFD (232 aa)) are alpha N-terminal domain (alpha-NTD). The segment at 248–336 (FNPALLKKVD…DLAKRYEDQY (89 aa)) is alpha C-terminal domain (alpha-CTD).

Belongs to the RNA polymerase alpha chain family. As to quaternary structure, homodimer. The RNAP catalytic core consists of 2 alpha, 1 beta, 1 beta' and 1 omega subunit. When a sigma factor is associated with the core the holoenzyme is formed, which can initiate transcription.

The catalysed reaction is RNA(n) + a ribonucleoside 5'-triphosphate = RNA(n+1) + diphosphate. DNA-dependent RNA polymerase catalyzes the transcription of DNA into RNA using the four ribonucleoside triphosphates as substrates. This chain is DNA-directed RNA polymerase subunit alpha, found in Rhizobium etli (strain CIAT 652).